The following is an 859-amino-acid chain: Active breakpoint cluster region-related protein (859 aa).

Positions 31 to 84 are disordered; sequence AEGHEEQKGPPEGSETMPYIDESPTMSPQLSARSQGGGESISPTPPEGLAPGVE. Residues 54-64 are compositionally biased toward polar residues; that stretch reads PTMSPQLSARS. Ser-57 carries the post-translational modification Phosphoserine. Residues 91-284 form the DH domain; it reads MRKLVLSGFL…QNFLSSINED (194 aa). One can recognise a PH domain in the interval 301–459; it reads QLVKDGFLVE…WREAIQKLQK (159 aa). The C2 domain occupies 484–613; the sequence is TVHNIPVTSN…ESKNWHTDVI (130 aa). The 199-residue stretch at 647–845 folds into the Rho-GAP domain; it reads VKISVVTKRE…YYLQHPPISF (199 aa).

Interacts with DLG4. Expressed in brain, including the cortex, hippocampus, cerebellum, and brainstem, as well as the spinal cord (at protein level).

The protein resides in the cell projection. It localises to the dendritic spine. Its subcellular location is the axon. The protein localises to the synapse. Protein with a unique structure having two opposing regulatory activities toward small GTP-binding proteins. The C-terminus is a GTPase-activating protein domain which stimulates GTP hydrolysis by RAC1, RAC2 and CDC42. Accelerates the intrinsic rate of GTP hydrolysis of RAC1 or CDC42, leading to down-regulation of the active GTP-bound form. The central Dbl homology (DH) domain functions as guanine nucleotide exchange factor (GEF) that modulates the GTPases CDC42, RHOA and RAC1. Promotes the conversion of CDC42, RHOA and RAC1 from the GDP-bound to the GTP-bound form. Functions as an important negative regulator of neuronal RAC1 activity. Regulates macrophage functions such as CSF-1 directed motility and phagocytosis through the modulation of RAC1 activity. This chain is Active breakpoint cluster region-related protein, found in Rattus norvegicus (Rat).